A 61-amino-acid polypeptide reads, in one-letter code: Large ribosomal subunit protein uL30 (61 aa).

It belongs to the universal ribosomal protein uL30 family. As to quaternary structure, part of the 50S ribosomal subunit.

This Treponema pallidum subsp. pallidum (strain SS14) protein is Large ribosomal subunit protein uL30.